A 306-amino-acid chain; its full sequence is Acetylglutamate kinase (306 aa).

Residues 68–69 (GG), Arg90, and Asn195 each bind substrate.

It belongs to the acetylglutamate kinase family. ArgB subfamily.

It is found in the cytoplasm. The catalysed reaction is N-acetyl-L-glutamate + ATP = N-acetyl-L-glutamyl 5-phosphate + ADP. It functions in the pathway amino-acid biosynthesis; L-arginine biosynthesis; N(2)-acetyl-L-ornithine from L-glutamate: step 2/4. Catalyzes the ATP-dependent phosphorylation of N-acetyl-L-glutamate. This chain is Acetylglutamate kinase, found in Chromohalobacter salexigens (strain ATCC BAA-138 / DSM 3043 / CIP 106854 / NCIMB 13768 / 1H11).